Here is a 306-residue protein sequence, read N- to C-terminus: Transcription factor MYBS1 (306 aa).

In terms of domain architecture, Myb-like spans 18 to 73 (WTREDDKAFENALAACAAPPPADGGAPDDDWFAALAASVPGARSAEEVRRHYEALV). Residues 72 to 86 (LVEDVAAIDAGRVPL) carry the Nuclear export signal 1 motif. The segment at 89–142 (YAGEESAAPPDGAGAAAAASKDGGHRRDERKGGGGGYDGGKSCSKAEQERRKGI) is disordered. Residues 92–109 (EESAAPPDGAGAAAAASK) are compositionally biased toward low complexity. Composition is skewed to basic and acidic residues over residues 110-120 (DGGHRRDERKG) and 132-142 (SKAEQERRKGI). Residues 133-140 (KAEQERRK) carry the Nuclear localization signal 1 motif. Residues 136-192 (QERRKGIPWTEEEHRLFLLGLDKFGKGDWRSISRNFVISRTPTQVASHAQKYFIRLN) form the HTH myb-type domain. Positions 164–188 (WRSISRNFVISRTPTQVASHAQKYF) form a DNA-binding region, H-T-H motif. The short motif at 196 to 200 (RDRRR) is the Nuclear localization signal 2 element. Residues 203 to 215 (IHDITSVTAGDQV) carry the Nuclear export signal 2 motif. The segment covering 228-241 (ATGNPAAAALGPPG) has biased composition (low complexity). The segment at 228–255 (ATGNPAAAALGPPGMKHHHHHHPGGAPP) is disordered.

In terms of assembly, homodimer. Interacts with GAMYB. In terms of tissue distribution, expressed in aboveground tissues, with the highest level in leaves.

The protein localises to the nucleus. The protein resides in the cytoplasm. Its function is as follows. Transcription activator that binds to 5'-TATCCA-3' elements in gene promoters. Derepresses strongly the sugar-repressed transcription of promoters containing SRS or 5'-TATCCA-3' elements. Functions with GAMYB to integrate diverse nutrient starvation and gibberellin (GA) signaling pathways during germination of grains. Sugar, nitrogen and phosphate starvation signals converge and interconnect with GA to promote the co-nuclear import of MYBS1 and GAMYB, resulting in the expression of a large set of GA-inducible hydrolases, transporters, and regulators that are essential for mobilization of nutrient reserves in the endosperm to support seedling growth. This is Transcription factor MYBS1 from Oryza sativa subsp. japonica (Rice).